A 247-amino-acid chain; its full sequence is Cell division protein ZapD (247 aa).

This sequence belongs to the ZapD family. In terms of assembly, interacts with FtsZ.

It is found in the cytoplasm. In terms of biological role, cell division factor that enhances FtsZ-ring assembly. Directly interacts with FtsZ and promotes bundling of FtsZ protofilaments, with a reduction in FtsZ GTPase activity. This chain is Cell division protein ZapD, found in Salmonella arizonae (strain ATCC BAA-731 / CDC346-86 / RSK2980).